We begin with the raw amino-acid sequence, 421 residues long: Acetate kinase (421 aa).

Position 7 (asparagine 7) interacts with Mg(2+). Lysine 14 is an ATP binding site. Arginine 91 is a substrate binding site. Aspartate 148 (proton donor/acceptor) is an active-site residue. Residues 208–212 (HIGNG) and 283–285 (DRR) contribute to the ATP site. Glutamate 387 is a Mg(2+) binding site.

Belongs to the acetokinase family. Homodimer. Mg(2+) serves as cofactor. Mn(2+) is required as a cofactor.

Its subcellular location is the cytoplasm. The catalysed reaction is acetate + ATP = acetyl phosphate + ADP. It functions in the pathway metabolic intermediate biosynthesis; acetyl-CoA biosynthesis; acetyl-CoA from acetate: step 1/2. In terms of biological role, catalyzes the formation of acetyl phosphate from acetate and ATP. Can also catalyze the reverse reaction. This Trichlorobacter lovleyi (strain ATCC BAA-1151 / DSM 17278 / SZ) (Geobacter lovleyi) protein is Acetate kinase.